The primary structure comprises 340 residues: Replication factor C subunit 5 (340 aa).

Met1 is subject to N-acetylmethionine. 60 to 67 (GPPGTGKT) lines the ATP pocket.

This sequence belongs to the activator 1 small subunits family. As to quaternary structure, subunit of the RFC complex, an heteropentameric complex consisting of a large subunit RFC1 and four small subunits RFC2, RFC3, RFC4 and RFC5; the RFC complex interacts with PCNA. Forms an heterotetrameric complex with RFC2, RFC3 and RFC4; this complex has ATPase activity but is not stimulated by PCNA. The heterotetramer of subunits RFC2, RFC3, RFC4 and RFC5 interacts with RAD17.

It localises to the nucleus. Subunit of the replication factor C (RFC) complex which acts during elongation of primed DNA templates by DNA polymerases delta and epsilon, and is necessary for ATP-dependent loading of proliferating cell nuclear antigen (PCNA) onto primed DNA. In Homo sapiens (Human), this protein is Replication factor C subunit 5 (RFC5).